A 445-amino-acid polypeptide reads, in one-letter code: Phosphoglucosamine mutase (445 aa).

Serine 100 (phosphoserine intermediate) is an active-site residue. The Mg(2+) site is built by serine 100, aspartate 240, aspartate 242, and aspartate 244. Serine 100 carries the phosphoserine modification.

It belongs to the phosphohexose mutase family. The cofactor is Mg(2+). In terms of processing, activated by phosphorylation.

The catalysed reaction is alpha-D-glucosamine 1-phosphate = D-glucosamine 6-phosphate. Its function is as follows. Catalyzes the conversion of glucosamine-6-phosphate to glucosamine-1-phosphate. The sequence is that of Phosphoglucosamine mutase from Pelotomaculum thermopropionicum (strain DSM 13744 / JCM 10971 / SI).